Reading from the N-terminus, the 163-residue chain is Xanthine-guanine phosphoribosyltransferase (163 aa).

5-phospho-alpha-D-ribose 1-diphosphate-binding positions include 43–44 and 95–103; these read RG and DDLADTGGT. Position 96 (Asp-96) interacts with Mg(2+). The guanine site is built by Asp-99 and Ile-142. Xanthine-binding residues include Asp-99 and Ile-142. GMP contacts are provided by residues 99–103 and 141–142; these read DTGGT and WI.

The protein belongs to the purine/pyrimidine phosphoribosyltransferase family. XGPT subfamily. In terms of assembly, homotetramer. The cofactor is Mg(2+).

Its subcellular location is the cell inner membrane. It catalyses the reaction GMP + diphosphate = guanine + 5-phospho-alpha-D-ribose 1-diphosphate. The enzyme catalyses XMP + diphosphate = xanthine + 5-phospho-alpha-D-ribose 1-diphosphate. The catalysed reaction is IMP + diphosphate = hypoxanthine + 5-phospho-alpha-D-ribose 1-diphosphate. Its pathway is purine metabolism; GMP biosynthesis via salvage pathway; GMP from guanine: step 1/1. It functions in the pathway purine metabolism; XMP biosynthesis via salvage pathway; XMP from xanthine: step 1/1. Its function is as follows. Purine salvage pathway enzyme that catalyzes the transfer of the ribosyl-5-phosphate group from 5-phospho-alpha-D-ribose 1-diphosphate (PRPP) to the N9 position of the 6-oxopurines guanine and xanthine to form the corresponding ribonucleotides GMP (guanosine 5'-monophosphate) and XMP (xanthosine 5'-monophosphate), with the release of PPi. To a lesser extent, also acts on hypoxanthine. The sequence is that of Xanthine-guanine phosphoribosyltransferase from Nitratidesulfovibrio vulgaris (strain ATCC 29579 / DSM 644 / CCUG 34227 / NCIMB 8303 / VKM B-1760 / Hildenborough) (Desulfovibrio vulgaris).